The following is a 552-amino-acid chain: Urocanate hydratase (552 aa).

NAD(+) contacts are provided by residues 49 to 50, Gln-127, 173 to 175, Asp-193, 239 to 240, 260 to 264, 270 to 271, and Tyr-319; these read GG, GMG, NA, QTSAH, and YI. Cys-407 is an active-site residue. Gly-489 is a binding site for NAD(+).

It belongs to the urocanase family. Requires NAD(+) as cofactor.

Its subcellular location is the cytoplasm. The enzyme catalyses 4-imidazolone-5-propanoate = trans-urocanate + H2O. The protein operates within amino-acid degradation; L-histidine degradation into L-glutamate; N-formimidoyl-L-glutamate from L-histidine: step 2/3. Its function is as follows. Catalyzes the conversion of urocanate to 4-imidazolone-5-propionate. This chain is Urocanate hydratase, found in Bacillus cereus (strain ATCC 10987 / NRS 248).